Reading from the N-terminus, the 337-residue chain is Undecaprenyl-phosphate 4-deoxy-4-formamido-L-arabinose transferase (337 aa).

The next 2 helical transmembrane spans lie at 235–255 (LSII…LLIV) and 270–290 (FVLF…MGLL).

It belongs to the glycosyltransferase 2 family.

The protein resides in the cell inner membrane. The catalysed reaction is UDP-4-deoxy-4-formamido-beta-L-arabinose + di-trans,octa-cis-undecaprenyl phosphate = 4-deoxy-4-formamido-alpha-L-arabinopyranosyl di-trans,octa-cis-undecaprenyl phosphate + UDP. It participates in glycolipid biosynthesis; 4-amino-4-deoxy-alpha-L-arabinose undecaprenyl phosphate biosynthesis; 4-amino-4-deoxy-alpha-L-arabinose undecaprenyl phosphate from UDP-4-deoxy-4-formamido-beta-L-arabinose and undecaprenyl phosphate: step 1/2. It functions in the pathway bacterial outer membrane biogenesis; lipopolysaccharide biosynthesis. Functionally, catalyzes the transfer of 4-deoxy-4-formamido-L-arabinose from UDP to undecaprenyl phosphate. The modified arabinose is attached to lipid A and is required for resistance to polymyxin and cationic antimicrobial peptides. This Pseudomonas syringae pv. syringae (strain B728a) protein is Undecaprenyl-phosphate 4-deoxy-4-formamido-L-arabinose transferase.